The sequence spans 233 residues: Adenosylcobinamide-GDP ribazoletransferase (233 aa).

A run of 7 helical transmembrane segments spans residues 24–44 (LWAF…VLYL), 46–66 (LPLS…LLHL), 96–116 (IAGL…LQLV), 117–137 (PFYA…LALA), 156–176 (SGQL…VVVY), 184–204 (LLGL…FGGI), and 209–229 (IGAI…FAGA).

Belongs to the CobS family. Mg(2+) is required as a cofactor.

The protein resides in the cell membrane. It carries out the reaction alpha-ribazole + adenosylcob(III)inamide-GDP = adenosylcob(III)alamin + GMP + H(+). The catalysed reaction is alpha-ribazole 5'-phosphate + adenosylcob(III)inamide-GDP = adenosylcob(III)alamin 5'-phosphate + GMP + H(+). The protein operates within cofactor biosynthesis; adenosylcobalamin biosynthesis; adenosylcobalamin from cob(II)yrinate a,c-diamide: step 7/7. Functionally, joins adenosylcobinamide-GDP and alpha-ribazole to generate adenosylcobalamin (Ado-cobalamin). Also synthesizes adenosylcobalamin 5'-phosphate from adenosylcobinamide-GDP and alpha-ribazole 5'-phosphate. In Thermococcus onnurineus (strain NA1), this protein is Adenosylcobinamide-GDP ribazoletransferase.